The sequence spans 131 residues: UPF0134 protein MPN_010 (131 aa).

This sequence belongs to the UPF0134 family.

This is UPF0134 protein MPN_010 from Mycoplasma pneumoniae (strain ATCC 29342 / M129 / Subtype 1) (Mycoplasmoides pneumoniae).